The primary structure comprises 286 residues: 4-diphosphocytidyl-2-C-methyl-D-erythritol kinase (286 aa).

K11 is a catalytic residue. An ATP-binding site is contributed by 94–104; it reads PMGGGIGGGSS. Residue D136 is part of the active site.

It belongs to the GHMP kinase family. IspE subfamily.

The enzyme catalyses 4-CDP-2-C-methyl-D-erythritol + ATP = 4-CDP-2-C-methyl-D-erythritol 2-phosphate + ADP + H(+). It participates in isoprenoid biosynthesis; isopentenyl diphosphate biosynthesis via DXP pathway; isopentenyl diphosphate from 1-deoxy-D-xylulose 5-phosphate: step 3/6. Catalyzes the phosphorylation of the position 2 hydroxy group of 4-diphosphocytidyl-2C-methyl-D-erythritol. The protein is 4-diphosphocytidyl-2-C-methyl-D-erythritol kinase of Pseudomonas entomophila (strain L48).